The sequence spans 229 residues: Potassium/proton antiporter CemA (229 aa).

3 consecutive transmembrane segments (helical) span residues 7–27 (LTPLPYLASIVFLPWWISLSF), 106–126 (IILHFSTNIITLTILSGFFIM), and 189–209 (IISGLVSTFPVILDTILKYWI).

This sequence belongs to the CemA family.

Its subcellular location is the plastid. It is found in the chloroplast inner membrane. It carries out the reaction K(+)(in) + H(+)(out) = K(+)(out) + H(+)(in). Functionally, contributes to K(+)/H(+) antiport activity by supporting proton efflux to control proton extrusion and homeostasis in chloroplasts in a light-dependent manner to modulate photosynthesis. Prevents excessive induction of non-photochemical quenching (NPQ) under continuous-light conditions. Indirectly promotes efficient inorganic carbon uptake into chloroplasts. This chain is Potassium/proton antiporter CemA, found in Ceratophyllum demersum (Rigid hornwort).